Reading from the N-terminus, the 278-residue chain is Extracellular metalloprotease GLRG_06511 (278 aa).

A signal peptide spans 1 to 19 (MQFKSLLVSALAAASTALA). An N-linked (GlcNAc...) asparagine glycan is attached at N51. H190 contributes to the Zn(2+) binding site. E191 is an active-site residue. H194 is a Zn(2+) binding site. C227 and C254 are oxidised to a cystine.

It belongs to the peptidase M43B family.

The protein localises to the secreted. In terms of biological role, secreted metalloproteinase that allows assimilation of proteinaceous substrates. In Colletotrichum graminicola (strain M1.001 / M2 / FGSC 10212) (Maize anthracnose fungus), this protein is Extracellular metalloprotease GLRG_06511.